Consider the following 701-residue polypeptide: Polyribonucleotide nucleotidyltransferase (701 aa).

2 residues coordinate Mg(2+): aspartate 487 and aspartate 493. One can recognise a KH domain in the interval proline 554 to isoleucine 613. One can recognise an S1 motif domain in the interval glycine 623 to lysine 691.

Belongs to the polyribonucleotide nucleotidyltransferase family. In terms of assembly, component of the RNA degradosome, which is a multiprotein complex involved in RNA processing and mRNA degradation. Mg(2+) serves as cofactor.

It localises to the cytoplasm. It carries out the reaction RNA(n+1) + phosphate = RNA(n) + a ribonucleoside 5'-diphosphate. Its function is as follows. Involved in mRNA degradation. Catalyzes the phosphorolysis of single-stranded polyribonucleotides processively in the 3'- to 5'-direction. This chain is Polyribonucleotide nucleotidyltransferase, found in Pseudomonas putida (Arthrobacter siderocapsulatus).